We begin with the raw amino-acid sequence, 120 residues long: uncharacterized protein (120 aa).

Residues 90–120 are disordered; it reads SLASRGGHMTQSGQCHVSGSLLGRGHKSRGR.

This is an uncharacterized protein from Homo sapiens (Human).